A 362-amino-acid chain; its full sequence is sn-glycerol-3-phosphate import ATP-binding protein UgpC (362 aa).

The 232-residue stretch at 4–235 (LSFRNVKKTY…PASTFVAGFI (232 aa)) folds into the ABC transporter domain. Position 37-44 (37-44 (GPSGCGKS)) interacts with ATP.

This sequence belongs to the ABC transporter superfamily. sn-glycerol-3-phosphate importer (TC 3.A.1.1.3) family. In terms of assembly, the complex is composed of two ATP-binding proteins (UgpC), two transmembrane proteins (UgpA and UgpE) and a solute-binding protein (UgpB).

It localises to the cell inner membrane. It catalyses the reaction sn-glycerol 3-phosphate(out) + ATP + H2O = sn-glycerol 3-phosphate(in) + ADP + phosphate + H(+). In terms of biological role, part of the ABC transporter complex UgpBAEC involved in sn-glycerol-3-phosphate (G3P) import. Responsible for energy coupling to the transport system. This is sn-glycerol-3-phosphate import ATP-binding protein UgpC from Bordetella parapertussis (strain 12822 / ATCC BAA-587 / NCTC 13253).